The following is a 180-amino-acid chain: GTP cyclohydrolase 1 (180 aa).

Positions 71, 74, and 142 each coordinate Zn(2+).

This sequence belongs to the GTP cyclohydrolase I family. In terms of assembly, homomer.

It catalyses the reaction GTP + H2O = 7,8-dihydroneopterin 3'-triphosphate + formate + H(+). Its pathway is cofactor biosynthesis; 7,8-dihydroneopterin triphosphate biosynthesis; 7,8-dihydroneopterin triphosphate from GTP: step 1/1. The sequence is that of GTP cyclohydrolase 1 from Helicobacter pylori (strain G27).